The chain runs to 67 residues: uncharacterized protein (67 aa).

2 helical membrane passes run 6 to 26 (GQLW…CVLM) and 38 to 58 (NNII…IIII).

The protein resides in the membrane. This is an uncharacterized protein from Dictyostelium discoideum (Social amoeba).